We begin with the raw amino-acid sequence, 367 residues long: C-C chemokine receptor type 9 (367 aa).

Residues 1-46 (MVPTEATSLILNPSDDYGYDGTPPMEYDTNLTDYFCEKSHVRQFAG) are Extracellular-facing. Asn-30 carries N-linked (GlcNAc...) asparagine glycosylation. 2 disulfide bridges follow: Cys-36–Cys-287 and Cys-117–Cys-196. Residues 47–72 (HFLPPLYWLVFIVGAVGNSLVILVYW) form a helical membrane-spanning segment. The Cytoplasmic portion of the chain corresponds to 73 to 83 (YCTRVKTMTDM). The helical transmembrane segment at 84 to 107 (FLLNLAIADLLFLTTLPFWAIAAA) threads the bilayer. Over 108–118 (DQWKFQTFMCK) the chain is Extracellular. A helical membrane pass occupies residues 119-148 (VVNSMYKMNFYSCVLLIMCISVDRYIAIAQ). Residues 149–157 (AMRAQMWRQ) lie on the Cytoplasmic side of the membrane. Residues 158–183 (KRLLYSKMVCFTIWVMAAALCLPELL) form a helical membrane-spanning segment. At 184–206 (YSQVKEEHGTAICTVVYSSNEST) the chain is on the extracellular side. Asn-203 carries N-linked (GlcNAc...) asparagine glycosylation. Residues 207–241 (KLKSAVLTLKVTLGFFLPFVVMACCYAIIIHTLIR) form a helical membrane-spanning segment. Residues 242–246 (AKKSS) are Cytoplasmic-facing. The helical transmembrane segment at 247 to 281 (KHKALKVTITVLTVFVLSQFPHNCVLLVQTIDAYA) threads the bilayer. At 282–288 (TFISSCA) the chain is on the extracellular side. Residues 289 to 319 (LSIKIDICFQVTQTVAFFHSCLNPVLYVFVG) form a helical membrane-spanning segment. At 320-367 (ERFRRDLVKTLKNLGCISQAQWVSFTRREGSLKLSSMLLETTSGALSF) the chain is on the cytoplasmic side.

It belongs to the G-protein coupled receptor 1 family.

The protein localises to the cell membrane. Receptor for chemokine SCYA25/TECK. Subsequently transduces a signal by increasing the intracellular calcium ions level. This chain is C-C chemokine receptor type 9 (CCR9), found in Ovis aries (Sheep).